A 241-amino-acid chain; its full sequence is Keratin-associated protein 5-5 (241 aa).

15 repeat units span residues 35–38 (CCKP), 41–44 (CCKP), 47–50 (CCVP), 105–108 (CCKP), 115–118 (CCKP), 133–136 (CCKP), 143–146 (CCKP), 161–164 (CCKP), 171–174 (CCKP), 181–184 (CCKP), 191–194 (CCKP), 201–204 (CCKP), 211–214 (CCKP), 221–224 (CCKP), and 231–234 (CCAP). Residues 35–234 (CCKPVCCCKP…CCCQSSCCAP (200 aa)) are 15 X 4 AA repeats of C-C-X-P.

It belongs to the KRTAP type 5 family. Interacts with hair keratins.

In the hair cortex, hair keratin intermediate filaments are embedded in an interfilamentous matrix, consisting of hair keratin-associated protein (KRTAP), which are essential for the formation of a rigid and resistant hair shaft through their extensive disulfide bond cross-linking with abundant cysteine residues of hair keratins. The matrix proteins include the high-sulfur and high-glycine-tyrosine keratins. This is Keratin-associated protein 5-5 from Mus musculus (Mouse).